The following is a 467-amino-acid chain: Cysteine--tRNA ligase (467 aa).

Zn(2+) is bound at residue Cys-28. A 'HIGH' region motif is present at residues Met-30 to His-40. 3 residues coordinate Zn(2+): Cys-209, His-234, and Glu-238. Residues Lys-266 to Ser-270 carry the 'KMSKS' region motif. Lys-269 contributes to the ATP binding site.

Belongs to the class-I aminoacyl-tRNA synthetase family. In terms of assembly, monomer. Zn(2+) serves as cofactor.

Its subcellular location is the cytoplasm. It carries out the reaction tRNA(Cys) + L-cysteine + ATP = L-cysteinyl-tRNA(Cys) + AMP + diphosphate. The polypeptide is Cysteine--tRNA ligase (Hahella chejuensis (strain KCTC 2396)).